The sequence spans 229 residues: Large ribosomal subunit protein uL1 (229 aa).

It belongs to the universal ribosomal protein uL1 family. As to quaternary structure, part of the 50S ribosomal subunit.

Its function is as follows. Binds directly to 23S rRNA. The L1 stalk is quite mobile in the ribosome, and is involved in E site tRNA release. Protein L1 is also a translational repressor protein, it controls the translation of the L11 operon by binding to its mRNA. The chain is Large ribosomal subunit protein uL1 from Streptococcus suis (strain 98HAH33).